Here is a 139-residue protein sequence, read N- to C-terminus: D-ribose pyranase (139 aa).

The active-site Proton donor is His20. Substrate-binding positions include Asp28, His106, and 128-130 (YAN).

The protein belongs to the RbsD / FucU family. RbsD subfamily. In terms of assembly, homodecamer.

The protein resides in the cytoplasm. The catalysed reaction is beta-D-ribopyranose = beta-D-ribofuranose. It participates in carbohydrate metabolism; D-ribose degradation; D-ribose 5-phosphate from beta-D-ribopyranose: step 1/2. Its function is as follows. Catalyzes the interconversion of beta-pyran and beta-furan forms of D-ribose. The polypeptide is D-ribose pyranase (Cronobacter sakazakii (strain ATCC BAA-894) (Enterobacter sakazakii)).